The following is a 124-amino-acid chain: Prefoldin subunit beta (124 aa).

The protein belongs to the prefoldin subunit beta family. As to quaternary structure, heterohexamer of two alpha and four beta subunits.

Its subcellular location is the cytoplasm. Its function is as follows. Molecular chaperone capable of stabilizing a range of proteins. Seems to fulfill an ATP-independent, HSP70-like function in archaeal de novo protein folding. The sequence is that of Prefoldin subunit beta (pfdB) from Thermoplasma volcanium (strain ATCC 51530 / DSM 4299 / JCM 9571 / NBRC 15438 / GSS1).